An 86-amino-acid chain; its full sequence is Small ribosomal subunit protein bS20 (86 aa).

Residues 1 to 25 (MANIKSQMKRIKTNEANRQRNKAVK) are disordered.

The protein belongs to the bacterial ribosomal protein bS20 family.

Its function is as follows. Binds directly to 16S ribosomal RNA. The protein is Small ribosomal subunit protein bS20 of Saccharopolyspora erythraea (strain ATCC 11635 / DSM 40517 / JCM 4748 / NBRC 13426 / NCIMB 8594 / NRRL 2338).